An 817-amino-acid polypeptide reads, in one-letter code: Dynamin-related protein 5A (817 aa).

Residues 1–20 (MANSNTYLTTPTKTPSSRRN) are compositionally biased toward polar residues. Residues 1 to 37 (MANSNTYLTTPTKTPSSRRNQQSQSKMQSHSKDPINA) form a disordered region. A Dynamin-type G domain is found at 59–346 (KLPIPEIVAI…LQKRYKEAAP (288 aa)). Positions 69–76 (GGQSDGKS) are G1 motif. 69 to 76 (GGQSDGKS) contacts GTP. The G2 motif stretch occupies residues 95–97 (GTR). The interval 175–178 (DTPG) is G3 motif. GTP-binding positions include 175–179 (DTPGF) and 244–247 (SKFD). The tract at residues 244 to 247 (SKFD) is G4 motif. Positions 280–283 (LPKD) are G5 motif. Disordered regions lie at residues 405–425 (APEQWGKTTEEERGESGIGSW) and 616–658 (LSDT…ETPS). Over residues 618-629 (DTSRDEPMKDQE) the composition is skewed to basic and acidic residues.

It belongs to the TRAFAC class dynamin-like GTPase superfamily. Dynamin/Fzo/YdjA family. As to expression, expressed in root and leaf meristems.

The protein localises to the cytoplasm. Its subcellular location is the cytoskeleton. It localises to the phragmoplast. In terms of biological role, probable microtubule-associated force-producing protein that is targeted to the forming cell plate during cytokinesis. May play a role in cell division. The protein is Dynamin-related protein 5A (DRP5A) of Arabidopsis thaliana (Mouse-ear cress).